The following is a 323-amino-acid chain: Cytoskeleton protein RodZ (323 aa).

Topologically, residues 1–111 are cytoplasmic; it reads MNTEASQDKT…LGKRRKKRDG (111 aa). The region spanning 19-71 is the HTH cro/C1-type domain; it reads LRQAREQLGLSQQAVAERLCLKMSTVRDIEEDNLSADLASTFVRGYIRSYAKL. Residues 30-49 constitute a DNA-binding region (H-T-H motif); sequence QQAVAERLCLKMSTVRDIEE. Residues 112-132 form a helical; Signal-anchor for type II membrane protein membrane-spanning segment; it reads WLMSFTWLIVFVVVGLTGAWW. At 133 to 323 the chain is on the periplasmic side; that stretch reads WQNHKAQQEE…RVARLTVAAQ (191 aa). Polar residues-rich tracts occupy residues 149–172 and 179–214; these read QSSAQLSQNNEGQSVPLTDSNADN and NGSTPVDTGVAPQQSQTPAVSGSATAQQPAVVSPSQ. The disordered stretch occupies residues 149-236; that stretch reads QSSAQLSQNN…APLPTADAGV (88 aa). The segment covering 215–234 has biased composition (low complexity); the sequence is TTLPETTPAAPTAPLPTADA.

This sequence belongs to the RodZ family.

Its subcellular location is the cell inner membrane. In terms of biological role, cytoskeletal protein that is involved in cell-shape control through regulation of the length of the long axis. This chain is Cytoskeleton protein RodZ, found in Serratia proteamaculans (strain 568).